The sequence spans 609 residues: MKWVTFISLLFLFSSAYSRGVFRRDAHKSEVAHRFKDLGEENFKALVLIAFAQYLQQCPFEDHVKLVNEVTEFAKTCVADESAENCDKSLHTLFGDKLCTVATLRETYGEMADCCAKQEPERNECFLQHKDDNPNLPRLVRPEVDVMCTAFHDNEETFLKKYLYEIARRHPYFYAPELLFFAKRYKAAFTECCQAADKAACLLPKLDELRDEGKASSAKQRLKCASLQKFGERAFKAWAVARLSQRFPKAEFAEVSKLVTDLTKVHTECCHGDLLECADDRADLAKYICENQDSISSKLKECCEKPLLEKSHCIAEVENDEMPADLPSLAADFVESKDVCKNYAEAKDVFLGMFLYEYARRHPDYSVVLLLRLAKTYETTLEKCCAAADPHECYAKVFDEFKPLVEEPQNLIKQNCELFEQLGEYKFQNALLVRYTKKVPQVSTPTLVEVSRNLGKVGSKCCKHPEAKRMPCAEDYLSVVLNQLCVLHEKTPVSDRVTKCCTESLVNRRPCFSALEVDETYVPKEFNAETFTFHADICTLSEKERQIKKQTALVELVKHKPKATKEQLKAVMDDFAAFVEKCCKADDKETCFAEEGKKLVAASQAALGL.

The first 18 residues, 1–18 (MKWVTFISLLFLFSSAYS), serve as a signal peptide directing secretion. The propeptide occupies 19–24 (RGVFRR). Albumin domains lie at 19–210 (RGVF…DELR), 211–403 (DEGK…EFKP), and 404–601 (LVEE…KLVA). Cu cation is bound at residue histidine 27. Serine 29 is subject to Phosphoserine; by FAM20C. Glutamate 30 lines the Ca(2+) pocket. Residue lysine 36 is glycosylated (N-linked (Glc) (glycation) lysine). A Ca(2+)-binding site is contributed by aspartate 37. An N-linked (Glc) (glycation) lysine; in vitro glycan is attached at lysine 75. A disulfide bridge connects residues cysteine 77 and cysteine 86. Phosphoserine; by FAM20C is present on residues serine 82 and serine 89. Residue histidine 91 coordinates Zn(2+). 4 disulfide bridges follow: cysteine 99/cysteine 115, cysteine 114/cysteine 125, cysteine 148/cysteine 193, and cysteine 192/cysteine 201. Threonine 107 carries the post-translational modification Phosphothreonine; by FAM20C. N-linked (Glc) (glycation) lysine; in vitro glycans are attached at residues lysine 161 and lysine 186. N-linked (Glc) (glycation) lysine; in vitro glycosylation is present at lysine 223. Disulfide bonds link cysteine 224/cysteine 270 and cysteine 269/cysteine 277. Position 229 is an N6-succinyllysine (lysine 229). N-linked (Glc) (glycation) lysine; in vitro glycosylation occurs at lysine 249. Lysine 257 carries N-linked (Glc) (glycation) lysine glycosylation. Lysine 264 contributes to the (4Z,15Z)-bilirubin IXalpha binding site. Residue glutamate 268 coordinates Ca(2+). Zn(2+) is bound by residues histidine 271 and aspartate 273. 4 residues coordinate Ca(2+): aspartate 273, glutamate 276, aspartate 279, and aspartate 283. Cystine bridges form between cysteine 289–cysteine 303 and cysteine 302–cysteine 313. Serine 297 carries the phosphoserine modification. N-linked (Glc) (glycation) lysine; in vitro glycosylation is present at lysine 300. Lysine 305 is a glycosylation site (N-linked (Glc) (glycation) lysine). A glycan (N-linked (Glc) (glycation) lysine; in vitro) is linked at lysine 337. 2 disulfide bridges follow: cysteine 340–cysteine 385 and cysteine 384–cysteine 393. N-linked (Glc) (glycation) lysine glycosylation is present at lysine 341. N-linked (GlcNAc...) asparagine; in variant Redhill glycosylation occurs at asparagine 342. Lysine 347 carries N-linked (Glc) (glycation) lysine; in vitro glycosylation. Lysine 375 carries an N-linked (Glc) (glycation) lysine glycan. N-linked (Glc) (glycation) lysine; in vitro glycosylation is found at lysine 402 and lysine 437. Disulfide bonds link cysteine 416–cysteine 462, cysteine 461–cysteine 472, cysteine 485–cysteine 501, and cysteine 500–cysteine 511. A Phosphoserine modification is found at serine 443. 2 positions are modified to phosphothreonine: threonine 444 and threonine 446. Lysine 460 is modified (N6-succinyllysine). Lysine 463 carries N-linked (Glc) (glycation) lysine glycosylation. The N-linked (Glc) (glycation) lysine; in vitro glycan is linked to lysine 468. A Phosphoserine modification is found at serine 513. N-linked (GlcNAc...) asparagine; in variant Casebrook glycosylation occurs at aspartate 518. 2 disulfide bridges follow: cysteine 538–cysteine 583 and cysteine 582–cysteine 591. Lysine 543 carries the post-translational modification N6-succinyllysine. Lysine 549 carries an N-linked (Glc) (glycation) lysine glycan. Position 558 is an N6-methyllysine; alternate (lysine 558). Residue lysine 558 is glycosylated (N-linked (Glc) (glycation) lysine; alternate). Lysine 560 and lysine 569 each carry an N-linked (Glc) (glycation) lysine; in vitro glycan. Lysine 588 carries the N6-succinyllysine modification. Lysine 597 is a glycosylation site (N-linked (Glc) (glycation) lysine; in vitro).

The protein belongs to the ALB/AFP/VDB family. As to quaternary structure, interacts with FCGRT; this interaction regulates ALB homeostasis. Interacts with TASOR. In plasma, occurs in a covalently-linked complex with chromophore-bound alpha-1-microglobulin with molar ratio 1:2 and 1:1; this interaction does not prevent fatty acid binding to ALB. Post-translationally, kenitra variant is partially O-glycosylated at Thr-620. It has two new disulfide bonds Cys-600 to Cys-602 and Cys-601 to Cys-606. In terms of processing, glycated in diabetic patients. Phosphorylated by FAM20C in the extracellular medium. Post-translationally, acetylated on Lys-223 by acetylsalicylic acid. Plasma.

Its subcellular location is the secreted. Its function is as follows. Binds water, Ca(2+), Na(+), K(+), fatty acids, hormones, bilirubin and drugs. Its main function is the regulation of the colloidal osmotic pressure of blood. Major zinc transporter in plasma, typically binds about 80% of all plasma zinc. Major calcium and magnesium transporter in plasma, binds approximately 45% of circulating calcium and magnesium in plasma. Potentially has more than two calcium-binding sites and might additionally bind calcium in a non-specific manner. The shared binding site between zinc and calcium at residue Asp-273 suggests a crosstalk between zinc and calcium transport in the blood. The rank order of affinity is zinc &gt; calcium &gt; magnesium. Binds to the bacterial siderophore enterobactin and inhibits enterobactin-mediated iron uptake of E.coli from ferric transferrin, and may thereby limit the utilization of iron and growth of enteric bacteria such as E.coli. Does not prevent iron uptake by the bacterial siderophore aerobactin. The sequence is that of Albumin (ALB) from Homo sapiens (Human).